The sequence spans 1087 residues: Exportin-7-B (1087 aa).

Positions 30 to 96 (AEKALVEFTN…RNYVLTYLAT (67 aa)) constitute an Importin N-terminal domain.

It belongs to the exportin family.

Its subcellular location is the cytoplasm. The protein localises to the nucleus. Mediates the nuclear export of proteins (cargos) with broad substrate specificity. The chain is Exportin-7-B (xpo7-b) from Xenopus laevis (African clawed frog).